A 215-amino-acid polypeptide reads, in one-letter code: Orotate phosphoribosyltransferase (215 aa).

Lysine 26 is a binding site for 5-phospho-alpha-D-ribose 1-diphosphate. Orotate is bound at residue 34–35 (FF). 5-phospho-alpha-D-ribose 1-diphosphate contacts are provided by residues 72–73 (YK), arginine 99, lysine 100, lysine 103, histidine 105, and 124–132 (DDVITAGTA). Orotate contacts are provided by threonine 128 and arginine 156.

The protein belongs to the purine/pyrimidine phosphoribosyltransferase family. PyrE subfamily. In terms of assembly, homodimer. Requires Mg(2+) as cofactor.

The enzyme catalyses orotidine 5'-phosphate + diphosphate = orotate + 5-phospho-alpha-D-ribose 1-diphosphate. Its pathway is pyrimidine metabolism; UMP biosynthesis via de novo pathway; UMP from orotate: step 1/2. Its function is as follows. Catalyzes the transfer of a ribosyl phosphate group from 5-phosphoribose 1-diphosphate to orotate, leading to the formation of orotidine monophosphate (OMP). In Cellvibrio japonicus (strain Ueda107) (Pseudomonas fluorescens subsp. cellulosa), this protein is Orotate phosphoribosyltransferase.